A 402-amino-acid polypeptide reads, in one-letter code: Dihydrolipoyllysine-residue acetyltransferase component of pyruvate dehydrogenase complex (402 aa).

The Lipoyl-binding domain occupies 2-77; sequence ANEFKFTDVG…HIGQVMAVID (76 aa). Lysine 43 carries the N6-lipoyllysine modification. Disordered regions lie at residues 82 to 110 and 143 to 172; these read AAAP…APVT and PQPT…PSGE. Pro residues-rich tracts occupy residues 87–107 and 143–162; these read APQP…PTPA and PQPT…PTPA. Histidine 374 is a catalytic residue.

The protein belongs to the 2-oxoacid dehydrogenase family. Forms a 24-polypeptide structural core with octahedral symmetry. (R)-lipoate is required as a cofactor.

It catalyses the reaction N(6)-[(R)-dihydrolipoyl]-L-lysyl-[protein] + acetyl-CoA = N(6)-[(R)-S(8)-acetyldihydrolipoyl]-L-lysyl-[protein] + CoA. In terms of biological role, the pyruvate dehydrogenase complex catalyzes the overall conversion of pyruvate to acetyl-CoA and CO(2). It contains multiple copies of three enzymatic components: pyruvate dehydrogenase (E1), dihydrolipoamide acetyltransferase (E2) and lipoamide dehydrogenase (E3). The sequence is that of Dihydrolipoyllysine-residue acetyltransferase component of pyruvate dehydrogenase complex (pdhC) from Mycoplasma pneumoniae (strain ATCC 29342 / M129 / Subtype 1) (Mycoplasmoides pneumoniae).